The sequence spans 660 residues: Bifunctional polymyxin resistance protein ArnA (660 aa).

Residues 1–304 form a formyltransferase ArnAFT region; sequence MKAVVFAYHN…EMYLVEGMRF (304 aa). H104 serves as the catalytic Proton donor; for formyltransferase activity. Residues R114 and 136–140 each bind (6R)-10-formyltetrahydrofolate; that span reads TVKPD. The interval 316-660 is dehydrogenase ArnADH; sequence RRQKVLIMGA…FLKTAVEETK (345 aa). NAD(+) is bound by residues D349 and 370–371; that span reads DI. UDP-alpha-D-glucuronate is bound by residues A395, Y400, and 434 to 435; that span reads TS. E436 functions as the Proton acceptor; for decarboxylase activity in the catalytic mechanism. UDP-alpha-D-glucuronate is bound by residues R462, N494, 528-537, and Y615; that span reads KLIDGGEQKR. R621 serves as the catalytic Proton donor; for decarboxylase activity.

The protein in the N-terminal section; belongs to the Fmt family. UDP-L-Ara4N formyltransferase subfamily. This sequence in the C-terminal section; belongs to the NAD(P)-dependent epimerase/dehydratase family. UDP-glucuronic acid decarboxylase subfamily. In terms of assembly, homohexamer, formed by a dimer of trimers.

The enzyme catalyses UDP-alpha-D-glucuronate + NAD(+) = UDP-beta-L-threo-pentopyranos-4-ulose + CO2 + NADH. It carries out the reaction UDP-4-amino-4-deoxy-beta-L-arabinose + (6R)-10-formyltetrahydrofolate = UDP-4-deoxy-4-formamido-beta-L-arabinose + (6S)-5,6,7,8-tetrahydrofolate + H(+). It participates in nucleotide-sugar biosynthesis; UDP-4-deoxy-4-formamido-beta-L-arabinose biosynthesis; UDP-4-deoxy-4-formamido-beta-L-arabinose from UDP-alpha-D-glucuronate: step 1/3. Its pathway is nucleotide-sugar biosynthesis; UDP-4-deoxy-4-formamido-beta-L-arabinose biosynthesis; UDP-4-deoxy-4-formamido-beta-L-arabinose from UDP-alpha-D-glucuronate: step 3/3. It functions in the pathway bacterial outer membrane biogenesis; lipopolysaccharide biosynthesis. In terms of biological role, bifunctional enzyme that catalyzes the oxidative decarboxylation of UDP-glucuronic acid (UDP-GlcUA) to UDP-4-keto-arabinose (UDP-Ara4O) and the addition of a formyl group to UDP-4-amino-4-deoxy-L-arabinose (UDP-L-Ara4N) to form UDP-L-4-formamido-arabinose (UDP-L-Ara4FN). The modified arabinose is attached to lipid A and is required for resistance to polymyxin and cationic antimicrobial peptides. The protein is Bifunctional polymyxin resistance protein ArnA of Shewanella sediminis (strain HAW-EB3).